The sequence spans 296 residues: HVA22-like protein i (296 aa).

A disordered region spans residues 146-296 (STPRPQPPQK…LRKTRSEESR (151 aa)). Residues 180–193 (VSLSSSSSSSSSEN) show a composition bias toward low complexity. Residues 223 to 233 (AGTTQIAQKSV) are compositionally biased toward polar residues. Acidic residues predominate over residues 251–261 (QIEEVEGEAES). The span at 270–281 (GPKETVMEETIR) shows a compositional bias: basic and acidic residues.

This sequence belongs to the DP1 family.

This Arabidopsis thaliana (Mouse-ear cress) protein is HVA22-like protein i (HVA22I).